The sequence spans 337 residues: Glyceraldehyde-3-phosphate dehydrogenase 3 (337 aa).

NAD(+)-binding positions include 12–13 and Lys-80; that span reads RM. Residues 152 to 154 and Thr-183 contribute to the D-glyceraldehyde 3-phosphate site; that span reads SCT. The active-site Nucleophile is the Cys-153. Asn-184 provides a ligand contact to NAD(+). D-glyceraldehyde 3-phosphate is bound by residues Arg-198, 211–212, and Arg-234; that span reads TG. Position 317 (Asn-317) interacts with NAD(+).

The protein belongs to the glyceraldehyde-3-phosphate dehydrogenase family. Homotetramer.

It is found in the cytoplasm. It catalyses the reaction D-glyceraldehyde 3-phosphate + phosphate + NAD(+) = (2R)-3-phospho-glyceroyl phosphate + NADH + H(+). Its pathway is carbohydrate degradation; glycolysis; pyruvate from D-glyceraldehyde 3-phosphate: step 1/5. The protein operates within carbohydrate biosynthesis; gluconeogenesis. In terms of biological role, catalyzes the oxidative phosphorylation of glyceraldehyde 3-phosphate (G3P) to 1,3-bisphosphoglycerate (BPG) using the cofactor NAD. The first reaction step involves the formation of a hemiacetal intermediate between G3P and a cysteine residue, and this hemiacetal intermediate is then oxidized to a thioester, with concomitant reduction of NAD to NADH. The reduced NADH is then exchanged with the second NAD, and the thioester is attacked by a nucleophilic inorganic phosphate to produce BPG. This Nostoc sp. (strain PCC 7120 / SAG 25.82 / UTEX 2576) protein is Glyceraldehyde-3-phosphate dehydrogenase 3 (gap3).